The primary structure comprises 364 residues: MRCVHFGECGSCTLALPYEDQLNFKANFIADKFREFFDGELEIFSSKPQRYRSRAEFGIWHENDEIYYTMHGSRSKFIKISECLKVDESIAALMPRLLEELGTSNELKSKIFGVEFISTSELCAVILLYHKRLEGLEAAFSELAKRLGVKIVARSRGQKISSDERELCDSFEINGLRYALNFGDSAFIQPNKCVNEKMISWAMNAVQNAEDMLEMYCGHGNFTIPLAGKFRRVLATEISKSSIANALKNCERNGIGNIKFLRMSAEELMSAFSGERGFRRLEGVNLADFTFSHVLVDPPRAGLEASVINFIKNYENIVYISCNPQTLYENLKELSLTHKATKFAMFDQFANTNHIECGVVLKKR.

Positions 189, 216, 221, 237, and 297 each coordinate S-adenosyl-L-methionine. Cysteine 322 functions as the Nucleophile in the catalytic mechanism. Glutamate 356 acts as the Proton acceptor in catalysis.

Belongs to the class I-like SAM-binding methyltransferase superfamily. RNA M5U methyltransferase family. TrmA subfamily.

The enzyme catalyses uridine(54) in tRNA + S-adenosyl-L-methionine = 5-methyluridine(54) in tRNA + S-adenosyl-L-homocysteine + H(+). It catalyses the reaction uridine(341) in tmRNA + S-adenosyl-L-methionine = 5-methyluridine(341) in tmRNA + S-adenosyl-L-homocysteine + H(+). Its function is as follows. Dual-specificity methyltransferase that catalyzes the formation of 5-methyluridine at position 54 (m5U54) in all tRNAs, and that of position 341 (m5U341) in tmRNA (transfer-mRNA). This chain is tRNA/tmRNA (uracil-C(5))-methyltransferase, found in Campylobacter curvus (strain 525.92).